The sequence spans 1022 residues: Collagen alpha-1(I) chain (1022 aa).

Residues 1-1022 (SAGGISVPGP…PGPPGPPGPP (1022 aa)) are disordered. 4-hydroxyproline is present on residues proline 20, proline 23, proline 26, proline 35, proline 38, proline 41, proline 56, proline 71, proline 77, proline 86, and proline 92. A compositionally biased stretch (low complexity) spans 28 to 47 (PQGFQGPPGEPGEPGASGPM). Residues 59–73 (NGDDGEAGKPGRPGE) show a composition bias toward basic and acidic residues. Lysine 95 bears the 5-hydroxylysine; alternate mark. O-linked (Gal...) hydroxylysine; alternate glycosylation is present at lysine 95. Serine 101 carries the phosphoserine modification. The span at 109–125 (DAGPAGPKGEPGSPGEN) shows a compositional bias: low complexity. A 4-hydroxyproline mark is found at proline 119, proline 122, proline 128, proline 137, proline 143, proline 164, proline 173, proline 176, proline 203, proline 206, proline 218, proline 224, proline 233, proline 239, proline 242, and proline 257. The segment covering 143-161 (PGASGPAGARGNDGAAGAA) has biased composition (low complexity). A compositionally biased stretch (pro residues) spans 163–175 (PPGPTGPAGPPGF). Low complexity predominate over residues 209–259 (AGAAGPAGNPGADGQPGAKGANGAPGIAGAPGFPGARGPSGPQGPSGAPGP). 5-hydroxylysine is present on lysine 260. 8 positions are modified to 4-hydroxyproline: proline 266, proline 269, proline 281, proline 290, proline 305, proline 311, proline 320, and proline 326. Gly residues predominate over residues 315-324 (GERGGPGSRG). 5-hydroxylysine is present on lysine 335. Proline 344, proline 353, proline 359, proline 365, proline 374, proline 377, proline 386, proline 395, proline 401, proline 413, proline 422, proline 431, proline 434, proline 452, proline 470, proline 476, proline 482, proline 488, proline 494, proline 500, proline 512, proline 521, proline 533, proline 545, proline 548, proline 554, proline 560, and proline 569 each carry 4-hydroxyproline. Residues 368-394 (KGLTGSPGSPGPDGKTGPPGPAGQDGR) are compositionally biased toward low complexity. Residues 403 to 422 (ARGQAGVMGFPGPKGAAGEP) show a composition bias toward low complexity. Low complexity predominate over residues 464 to 491 (QGPAGSPGFQGLPGPAGPPGEAGKPGEQ). Residues 530–557 (NGAPGNDGAKGDAGAPGAPGSQGAPGLQ) are compositionally biased toward low complexity. Lysine 581 carries the 5-hydroxylysine modification. 4-hydroxyproline is present on residues proline 587, proline 602, and proline 608. Residues 614-628 (SGPSGPAGPTGARGA) show a composition bias toward low complexity. The residue at position 617 (serine 617) is a Phosphoserine. A 4-hydroxyproline mark is found at proline 629, proline 635, proline 638, proline 647, proline 653, proline 671, proline 680, and proline 689. Residues 641-668 (AGFAGPPGADGQPGAKGEPGDAGAKGDA) show a composition bias toward low complexity. A compositionally biased stretch (pro residues) spans 670–682 (PPGPAGPTGPPGP). Position 692 is a 5-hydroxylysine (lysine 692). Low complexity predominate over residues 697-713 (SAGPPGATGFPGAAGRV). 4-hydroxyproline is present on residues proline 701 and proline 707. A 3-hydroxyproline modification is found at proline 715. A 4-hydroxyproline mark is found at proline 716, proline 725, proline 728, proline 749, proline 758, proline 767, proline 776, proline 794, proline 803, proline 806, proline 812, proline 827, proline 833, proline 839, proline 848, and proline 854. Low complexity predominate over residues 742–751 (ETGPAGRPGE). Over residues 761–776 (TGEKGSPGADGPAGAP) the composition is skewed to low complexity. Pro residues predominate over residues 826-836 (PPGPVGPPGLA). Positions 838 to 853 (PPGESGREGSPGAEGS) are enriched in low complexity. Lysine 863 is modified (5-hydroxylysine). The span at 872–887 (AGPPGAPGAPGAPGPV) shows a compositional bias: pro residues. A 4-hydroxyproline mark is found at proline 875, proline 878, and proline 881. Positions 908–922 (AGPAGARGPAGPQGP) are enriched in low complexity. The segment covering 923–937 (RGDKGETGEQGDRGI) has biased composition (basic and acidic residues). 5-hydroxylysine is present on lysine 926. Lysine 938 carries the 5-hydroxylysine; alternate modification. Lysine 938 carries an O-linked (Gal...) hydroxylysine; alternate glycan. 4-hydroxyproline is present on residues proline 953, proline 956, proline 974, and proline 989. Positions 956 to 989 (PGEQGPSGASGPAGPRGPPGSAGSPGKDGLNGLP) are enriched in low complexity. 3-hydroxyproline is present on proline 994. 4-hydroxyproline is present on proline 995. The segment covering 1007-1022 (VGPPGPPGPPGPPGPP) has biased composition (pro residues). Proline 1009 carries the post-translational modification 3-hydroxyproline. Proline 1010 is subject to 4-hydroxyproline. Proline 1012 is subject to 3-hydroxyproline. At proline 1013 the chain carries 4-hydroxyproline. 3-hydroxyproline is present on proline 1015. Proline 1016, proline 1019, and proline 1022 each carry 4-hydroxyproline.

The protein belongs to the fibrillar collagen family. In terms of assembly, trimers of one alpha 2(I) and two alpha 1(I) chains. Post-translationally, prolines at the third position of the tripeptide repeating unit (G-X-Y) are hydroxylated in some or all of the chains. Expressed in bone.

Its subcellular location is the secreted. It localises to the extracellular space. The protein localises to the extracellular matrix. In terms of biological role, type I collagen is a member of group I collagen (fibrillar forming collagen). The sequence is that of Collagen alpha-1(I) chain from Mylodon darwinii (Giant ground sloth).